The chain runs to 109 residues: Large ribosomal subunit protein eL30 (109 aa).

It belongs to the eukaryotic ribosomal protein eL30 family.

In Methanopyrus kandleri (strain AV19 / DSM 6324 / JCM 9639 / NBRC 100938), this protein is Large ribosomal subunit protein eL30.